The primary structure comprises 290 residues: PIH1 domain-containing protein 1 (290 aa).

Residues Ser12 and Ser173 each carry the phosphoserine modification.

This sequence belongs to the PIH1 family. Component of the R2TP complex composed at least of RUVBL1, RUVBL2, RPAP3 and PIHD1. Component of the PAQosome complex which is responsible for the biogenesis of several protein complexes and which consists of R2TP complex members RUVBL1, RUVBL2, RPAP3 and PIH1D1, URI complex members PFDN2, PFDN6, PDRG1, UXT and URI1 as well as ASDURF, POLR2E and DNAAF10/WDR92. Interacts with phosphorylated TELO2 and mediates interaction of TELO2 with the R2TP complex. Interacts with phosphorylated ECD, EFTUD2/SNRP116, RPB1 and UBR5 and with RPB1 in a phosphorylation-independent manner. Interacts with the core C/D box snoRNP particle components NOP58 and FBL and with RUVBL1/TIP49. Interacts with RPAP3 and DNAAF10. Interacts with histone H4 and with SWI/SNF complex member SMARCB1/SNF5. Interacts with the mTORC1 complex member RPTOR. Interacts with MSL1. In terms of tissue distribution, expressed at low levels in normal mammary epithelial cells (at protein level). Highest expression in lung, leukocyte and placenta. Expressed at lower levels in brain, prostate, colon, heart, small intestine, liver, ovary, pancreas, skeletal muscle, spleen, testis and thymus.

It localises to the nucleus. In terms of biological role, involved in the assembly of C/D box small nucleolar ribonucleoprotein (snoRNP) particles. Recruits the SWI/SNF complex to the core promoter of rRNA genes and enhances pre-rRNA transcription. Mediates interaction of TELO2 with the R2TP complex which is necessary for the stability of MTOR and SMG1. Positively regulates the assembly and activity of the mTORC1 complex. In Homo sapiens (Human), this protein is PIH1 domain-containing protein 1 (PIH1D1).